Consider the following 221-residue polypeptide: Chalcone--flavanone isomerase (221 aa).

Residues Thr-52, Asn-117, and Ser-193 each contribute to the substrate site.

Belongs to the chalcone isomerase family. Flowers.

It catalyses the reaction a chalcone = a flavanone.. It functions in the pathway secondary metabolite biosynthesis; flavonoid biosynthesis. Its function is as follows. Catalyzes the intramolecular cyclization of bicyclic chalcones into tricyclic (S)-flavanones. Responsible for the isomerization of 4,2',4',6'-tetrahydroxychalcone (also termed chalcone) into naringenin. The sequence is that of Chalcone--flavanone isomerase (CHI) from Gentiana triflora (Clustered gentian).